Consider the following 258-residue polypeptide: Probable F-box protein At2g29610 (258 aa).

The tract at residues 1-25 (MVELSEIPGDPNGADPNNNPQEEDE) is disordered. Over residues 8–20 (PGDPNGADPNNNP) the composition is skewed to low complexity. The region spanning 28 to 74 (LPILLQLPEELIERIIAHFPQCYSPSPILVCETFRQVINSDHFYYVT) is the F-box domain.

This is Probable F-box protein At2g29610 from Arabidopsis thaliana (Mouse-ear cress).